A 73-amino-acid polypeptide reads, in one-letter code: Translation initiation factor IF-1 (73 aa).

Positions 1-73 (MANKEELIEF…TKGRITYRAR (73 aa)) constitute an S1-like domain.

It belongs to the IF-1 family. Component of the 30S ribosomal translation pre-initiation complex which assembles on the 30S ribosome in the order IF-2 and IF-3, IF-1 and N-formylmethionyl-tRNA(fMet); mRNA recruitment can occur at any time during PIC assembly.

The protein localises to the cytoplasm. One of the essential components for the initiation of protein synthesis. Stabilizes the binding of IF-2 and IF-3 on the 30S subunit to which N-formylmethionyl-tRNA(fMet) subsequently binds. Helps modulate mRNA selection, yielding the 30S pre-initiation complex (PIC). Upon addition of the 50S ribosomal subunit IF-1, IF-2 and IF-3 are released leaving the mature 70S translation initiation complex. The sequence is that of Translation initiation factor IF-1 from Acinetobacter baumannii (strain ATCC 17978 / DSM 105126 / CIP 53.77 / LMG 1025 / NCDC KC755 / 5377).